Here is a 337-residue protein sequence, read N- to C-terminus: Anthranilate phosphoribosyltransferase (337 aa).

5-phospho-alpha-D-ribose 1-diphosphate-binding positions include glycine 81, 84–85 (GD), serine 89, 91–94 (NVST), 109–117 (KHGNRAASS), and alanine 121. Glycine 81 is an anthranilate binding site. Residue serine 93 participates in Mg(2+) binding. Residue asparagine 112 coordinates anthranilate. Arginine 167 contributes to the anthranilate binding site. Mg(2+)-binding residues include aspartate 226 and glutamate 227.

It belongs to the anthranilate phosphoribosyltransferase family. In terms of assembly, homodimer. The cofactor is Mg(2+).

The catalysed reaction is N-(5-phospho-beta-D-ribosyl)anthranilate + diphosphate = 5-phospho-alpha-D-ribose 1-diphosphate + anthranilate. Its pathway is amino-acid biosynthesis; L-tryptophan biosynthesis; L-tryptophan from chorismate: step 2/5. In terms of biological role, catalyzes the transfer of the phosphoribosyl group of 5-phosphorylribose-1-pyrophosphate (PRPP) to anthranilate to yield N-(5'-phosphoribosyl)-anthranilate (PRA). The sequence is that of Anthranilate phosphoribosyltransferase from Methylobacterium nodulans (strain LMG 21967 / CNCM I-2342 / ORS 2060).